We begin with the raw amino-acid sequence, 193 residues long: NADH-quinone oxidoreductase subunit B (193 aa).

Residues C49, C50, C115, and C144 each coordinate [4Fe-4S] cluster. The segment at 172–193 is disordered; that stretch reads FKKEEPREANAPVPVNTEMPLE.

Belongs to the complex I 20 kDa subunit family. As to quaternary structure, NDH-1 is composed of 14 different subunits. Subunits NuoB, C, D, E, F, and G constitute the peripheral sector of the complex. [4Fe-4S] cluster is required as a cofactor.

It is found in the cell inner membrane. It catalyses the reaction a quinone + NADH + 5 H(+)(in) = a quinol + NAD(+) + 4 H(+)(out). In terms of biological role, NDH-1 shuttles electrons from NADH, via FMN and iron-sulfur (Fe-S) centers, to quinones in the respiratory chain. The immediate electron acceptor for the enzyme in this species is believed to be ubiquinone. Couples the redox reaction to proton translocation (for every two electrons transferred, four hydrogen ions are translocated across the cytoplasmic membrane), and thus conserves the redox energy in a proton gradient. The polypeptide is NADH-quinone oxidoreductase subunit B (Akkermansia muciniphila (strain ATCC BAA-835 / DSM 22959 / JCM 33894 / BCRC 81048 / CCUG 64013 / CIP 107961 / Muc)).